A 65-amino-acid chain; its full sequence is Prokaryotic ubiquitin-like protein Pup (65 aa).

Positions 1–38 are disordered; it reads MANAQQQVFGGGGGDDAENNDAPQQGSGTQQVNVTGTD. Residues 21–59 form an ARC ATPase binding region; that stretch reads DAPQQGSGTQQVNVTGTDDLLDEIDGLLETNAEEFVRSY. Residues 22–34 are compositionally biased toward polar residues; the sequence is APQQGSGTQQVNV. At Gln65 the chain carries Deamidated glutamine. Gln65 is covalently cross-linked (Isoglutamyl lysine isopeptide (Gln-Lys) (interchain with K-? in acceptor proteins)).

This sequence belongs to the prokaryotic ubiquitin-like protein family. Strongly interacts with the proteasome-associated ATPase ARC through a hydrophobic interface; the interacting region of Pup lies in its C-terminal half. There is one Pup binding site per ARC hexamer ring. Post-translationally, is modified by deamidation of its C-terminal glutamine to glutamate by the deamidase Dop, a prerequisite to the subsequent pupylation process.

It participates in protein degradation; proteasomal Pup-dependent pathway. Its function is as follows. Protein modifier that is covalently attached to lysine residues of substrate proteins, thereby targeting them for proteasomal degradation. The tagging system is termed pupylation. This is Prokaryotic ubiquitin-like protein Pup from Corynebacterium urealyticum (strain ATCC 43042 / DSM 7109).